Reading from the N-terminus, the 847-residue chain is DNA mismatch repair protein MutS (847 aa).

An ATP-binding site is contributed by 602-609 (GPNMSGKS). Residues 788 to 807 (EKREASLPASRTDSQKVSEQ) are disordered. Residues 796-807 (ASRTDSQKVSEQ) are compositionally biased toward polar residues.

This sequence belongs to the DNA mismatch repair MutS family.

This protein is involved in the repair of mismatches in DNA. It is possible that it carries out the mismatch recognition step. This protein has a weak ATPase activity. The polypeptide is DNA mismatch repair protein MutS (Streptococcus gordonii (strain Challis / ATCC 35105 / BCRC 15272 / CH1 / DL1 / V288)).